Consider the following 208-residue polypeptide: Thymidylate kinase (208 aa).

10-17 (GPEGSGKT) is an ATP binding site.

The protein belongs to the thymidylate kinase family.

The catalysed reaction is dTMP + ATP = dTDP + ADP. Functionally, phosphorylation of dTMP to form dTDP in both de novo and salvage pathways of dTTP synthesis. The protein is Thymidylate kinase of Bacillus cereus (strain B4264).